The following is a 349-amino-acid chain: Magnesium-protoporphyrin IX monomethyl ester [oxidative] cyclase (349 aa).

Low complexity predominate over residues 1 to 10 (MTATTATAPA). A disordered region spans residues 1 to 23 (MTATTATAPAMRGGGRNELPPHL).

Belongs to the AcsF family. It depends on Fe cation as a cofactor.

The enzyme catalyses Mg-protoporphyrin IX 13-monomethyl ester + 3 NADPH + 3 O2 + 2 H(+) = 3,8-divinyl protochlorophyllide a + 3 NADP(+) + 5 H2O. The protein operates within porphyrin-containing compound metabolism; chlorophyll biosynthesis (light-independent). Functionally, catalyzes the formation of the isocyclic ring in chlorophyll biosynthesis. Mediates the cyclase reaction, which results in the formation of divinylprotochlorophyllide (Pchlide) characteristic of all chlorophylls from magnesium-protoporphyrin IX 13-monomethyl ester (MgPMME). This is Magnesium-protoporphyrin IX monomethyl ester [oxidative] cyclase from Prochlorococcus marinus (strain MIT 9303).